The chain runs to 101 residues: MIEEIIKKTEKGVLIDIEVTTNAKKNEIGKINKWRKRLEVKIKEQPIEGRANKAILKFLKEIFKTDVELNPVTTSPQKTVLISCDTKEYVVNILKREIKSV.

It belongs to the UPF0235 family.

This chain is UPF0235 protein Mevan_0378, found in Methanococcus vannielii (strain ATCC 35089 / DSM 1224 / JCM 13029 / OCM 148 / SB).